Reading from the N-terminus, the 344-residue chain is Melanocyte-stimulating hormone receptor (344 aa).

At 1-37 (MPMQGAQRKLLGSLNSTPTATSNPGLAANHTGAPCLE) the chain is on the extracellular side. Asn-29 is a glycosylation site (N-linked (GlcNAc...) asparagine). The helical transmembrane segment at 38-63 (VSIPDGLFLSLGLVSLVENVLVVAAI) threads the bilayer. The Cytoplasmic portion of the chain corresponds to 64–72 (AKNRNLHSS). The helical transmembrane segment at 73-93 (MYXFICCLALSDLLVSGSNML) threads the bilayer. The Extracellular portion of the chain corresponds to 94–118 (ETAIILLLEAGTLATRASVVQQLHN). Residues 119 to 140 (TIDVLTCSSMLCSLCFLGAIAV) traverse the membrane as a helical segment. Residues 141–163 (DRYISIFYALRYHSIMTLPRAQR) lie on the Cytoplasmic side of the membrane. Residues 164 to 183 (AIAAIWVASVLSSTLFITYY) form a helical membrane-spanning segment. The Extracellular portion of the chain corresponds to 184–191 (DHAAVLLC). Residues 192–211 (LVVFFLAMLVLMAVLYVHML) form a helical membrane-spanning segment. Residues 212–240 (ARACQHAQGIIRLHNRQLPAHKGFGLRGA) are Cytoplasmic-facing. The helical transmembrane segment at 241 to 266 (ATLTILLGIFFLCWGPFFLHLTLVVF) threads the bilayer. The Extracellular portion of the chain corresponds to 267–279 (CPQHLTCNCIFKN). A helical membrane pass occupies residues 280–300 (FKVFLTLIICNTIIDPLIYAF). Topologically, residues 301 to 344 (RSQELRRTLKEVLLCSSWPGCWAEGGGDSVWPGSCVTLRGPLPP) are cytoplasmic. Residue Cys-315 is the site of S-palmitoyl cysteine attachment.

The protein belongs to the G-protein coupled receptor 1 family. As to quaternary structure, interacts with MGRN1, but does not undergo MGRN1-mediated ubiquitination; this interaction competes with GNAS-binding and thus inhibits agonist-induced cAMP production. Interacts with OPN3; the interaction results in a decrease in MC1R-mediated cAMP signaling and ultimately a decrease in melanin production in melanocytes.

The protein resides in the cell membrane. Its function is as follows. Receptor for MSH (alpha, beta and gamma) and ACTH. The activity of this receptor is mediated by G proteins which activate adenylate cyclase. Mediates melanogenesis, the production of eumelanin (black/brown) and phaeomelanin (red/yellow), via regulation of cAMP signaling in melanocytes. The chain is Melanocyte-stimulating hormone receptor (MC1R) from Callithrix geoffroyi (Geoffroy's marmoset).